Here is a 202-residue protein sequence, read N- to C-terminus: Adenylyl-sulfate kinase (202 aa).

Residue 31-38 (GLSASGKS) coordinates ATP. The Phosphoserine intermediate role is filled by Ser-105.

The protein belongs to the APS kinase family.

It catalyses the reaction adenosine 5'-phosphosulfate + ATP = 3'-phosphoadenylyl sulfate + ADP + H(+). The protein operates within sulfur metabolism; hydrogen sulfide biosynthesis; sulfite from sulfate: step 2/3. Its function is as follows. Catalyzes the synthesis of activated sulfate. The sequence is that of Adenylyl-sulfate kinase (MET14) from Saccharomyces pastorianus (Lager yeast).